A 245-amino-acid polypeptide reads, in one-letter code: Venom nerve growth factor 1 (245 aa).

An N-terminal signal peptide occupies residues 1 to 18 (MSMLCYTLIIAFLIGIWA). A propeptide spanning residues 19-125 (APKSEDNVPL…ALNRNIRAKR (107 aa)) is cleaved from the precursor. Residues 47 to 66 (GLKTSRNTDQRHPAPKKAED) are compositionally biased toward basic and acidic residues. A disordered region spans residues 47–69 (GLKTSRNTDQRHPAPKKAEDQEL). Cystine bridges form between C139–C206, C182–C234, and C194–C236. Residues N148 and N151 are each glycosylated (N-linked (GlcNAc...) asparagine).

It belongs to the NGF-beta family. In terms of assembly, homodimer; non-covalently linked. As to expression, expressed by the venom gland.

The protein localises to the secreted. Nerve growth factor is important for the development and maintenance of the sympathetic and sensory nervous systems. It stimulates division and differentiation of sympathetic and embryonic sensory neurons as well as basal forebrain cholinergic neurons in the brain. Its relevance in the snake venom is not clear. However, it has been shown to inhibit metalloproteinase-dependent proteolysis of platelet glycoprotein Ib alpha, suggesting a metalloproteinase inhibition to prevent metalloprotease autodigestion and/or protection against prey proteases. Binds a lipid between the two protein chains in the homodimer. The lipid-bound form promotes histamine relase from mouse mast cells, contrary to the lipid-free form. The protein is Venom nerve growth factor 1 of Tropidechis carinatus (Australian rough-scaled snake).